We begin with the raw amino-acid sequence, 96 residues long: Conantokin Rl-B (96 aa).

Residues 1 to 21 form the signal peptide; it reads MQLYTYLYLLVPLVTFHLILG. A propeptide spanning residues 22–78 is cleaved from the precursor; that stretch reads TGTLDHGDALTERRSTDATALKPEPVLLQKSSARSTNDNGKDTQMKRILKKRGNKAR. The interval 51-96 is disordered; it reads KSSARSTNDNGKDTQMKRILKKRGNKARGEEELAEKAPEFARELAN. Residues 77 to 96 show a composition bias toward basic and acidic residues; it reads ARGEEELAEKAPEFARELAN. A divalent metal cation is bound at residue E81. 4-carboxyglutamate is present on residues E81, E82, and E85. E85 provides a ligand contact to a divalent metal cation. P88 bears the 4-hydroxyproline mark. E89 and E93 together coordinate a divalent metal cation. E89 and E93 each carry 4-carboxyglutamate. N96 is modified (asparagine amide).

Belongs to the conotoxin B superfamily. Requires Ca(2+) as cofactor. Mg(2+) is required as a cofactor. In terms of processing, hydroxylation of Pro-88 is important for NR2B/GRIN2B NMDA receptor selectivity. Removal of hydroxylation does not change global NMDA receptor antagonism (tested on WT neurons), but it decreases the inhibitory potency on NR2B/GRIN2B NMDA receptors and increases the inhibitory potency on NR2A/GRIN2A NMDA receptors. Hydroxylation of Pro-88 locally disrupts a small region of the divalent cation-induced alpha-helix but does not destabilize the entire helix. Expressed by the venom duct.

It localises to the secreted. Functionally, conantokins inhibit N-methyl-D-aspartate (NMDA) receptors. This toxin has antagonist activity on the NR2B/GRIN2B subunit (IC(50)=0.1 uM). In vivo, when delivered into the brain, is active has anticonvulsant activity in the model of epilepsy in mice. The chain is Conantokin Rl-B from Conus rolani (Cone snail).